The primary structure comprises 516 residues: Putative transposase y4bL/y4kJ/y4tB (516 aa).

In terms of domain architecture, HTH IS408-type spans 15–96; that stretch reads IRTILRLTHE…PDWALVVREL (82 aa). The 182-residue stretch at 138-319 folds into the Integrase catalytic domain; the sequence is FRNRHAAGAV…SRRELFEEIE (182 aa). The tract at residues 493–516 is disordered; it reads ERPQAEHAAPTPAHTNIRGRSYYQ.

This sequence belongs to the transposase IS21/IS408/IS1162 family.

The chain is Putative transposase y4bL/y4kJ/y4tB from Sinorhizobium fredii (strain NBRC 101917 / NGR234).